Here is a 361-residue protein sequence, read N- to C-terminus: tRNA N6-adenosine threonylcarbamoyltransferase (361 aa).

Fe cation-binding residues include H110 and H114. Residues 132 to 136 (LVSGG), D165, G178, D182, and N289 each bind substrate. D317 is a binding site for Fe cation.

This sequence belongs to the KAE1 / TsaD family. It depends on Fe(2+) as a cofactor.

Its subcellular location is the cytoplasm. The catalysed reaction is L-threonylcarbamoyladenylate + adenosine(37) in tRNA = N(6)-L-threonylcarbamoyladenosine(37) in tRNA + AMP + H(+). Its function is as follows. Required for the formation of a threonylcarbamoyl group on adenosine at position 37 (t(6)A37) in tRNAs that read codons beginning with adenine. Is involved in the transfer of the threonylcarbamoyl moiety of threonylcarbamoyl-AMP (TC-AMP) to the N6 group of A37, together with TsaE and TsaB. TsaD likely plays a direct catalytic role in this reaction. This is tRNA N6-adenosine threonylcarbamoyltransferase from Nitratidesulfovibrio vulgaris (strain ATCC 29579 / DSM 644 / CCUG 34227 / NCIMB 8303 / VKM B-1760 / Hildenborough) (Desulfovibrio vulgaris).